Here is a 1506-residue protein sequence, read N- to C-terminus: Condensin-2 complex subunit D3 (1506 aa).

The interval 154-194 (SNLTQKRKKDHSKSSKDNYRKSRKRGKPPRKEDYQVDELSR) is disordered. HEAT repeat units follow at residues 442–476 (HKFF…LELS), 532–567 (PGER…LKHC), and 574–605 (QDLL…VMAQ). The residue at position 562 (Ser562) is a Phosphoserine. Polar residues predominate over residues 884–897 (SDHLPSSQGTTDAL). The tract at residues 884-908 (SDHLPSSQGTTDALDSQPPFQPRSS) is disordered. Residues 968–1004 (TVMVDNYIPNISVCLKDSDPFIRKQTLVLLTNLLQEE) form an HEAT 4 repeat. Residues 1213–1270 (ALRELMNYLREVMQDYRDEINDFFAVDKQLASELEYDMKKYNEQLAQEQALTEHANAT) adopt a coiled-coil conformation. The tract at residues 1317–1353 (QDNADVPPTQSRPSAPRSNFTPTLPPISENGPLKIMS) is disordered. The segment covering 1324–1338 (PTQSRPSAPRSNFTP) has biased composition (polar residues). A phosphoserine mark is found at Ser1359, Ser1368, Ser1381, and Ser1393. Disordered regions lie at residues 1385–1412 (LPFN…ESDR) and 1473–1506 (PQSP…KTAN). Low complexity predominate over residues 1393–1405 (SPENPSSHESSLS). Positions 1492–1506 (SSRRSLRKAPLKTAN) are enriched in basic residues.

Component of the condensin-2 complex, which contains the SMC2 and SMC4 heterodimer, and 3 non SMC subunits that probably regulate the complex: NCAPH2, NCAPD3 and NCAPG2.

Its subcellular location is the nucleus. Functionally, regulatory subunit of the condensin-2 complex, a complex which establishes mitotic chromosome architecture and is involved in physical rigidity of the chromatid axis. May promote the resolution of double-strand DNA catenanes (intertwines) between sister chromatids. Condensin-mediated compaction likely increases tension in catenated sister chromatids, providing directionality for type II topoisomerase-mediated strand exchanges toward chromatid decatenation. Specifically required for decatenation of centromeric ultrafine DNA bridges during anaphase. Early in neurogenesis, may play an essential role to ensure accurate mitotic chromosome condensation in neuron stem cells, ultimately affecting neuron pool and cortex size. This chain is Condensin-2 complex subunit D3 (Ncapd3), found in Mus musculus (Mouse).